The following is a 512-amino-acid chain: Maturase K (512 aa).

It belongs to the intron maturase 2 family. MatK subfamily.

Its subcellular location is the plastid. It localises to the chloroplast. In terms of biological role, usually encoded in the trnK tRNA gene intron. Probably assists in splicing its own and other chloroplast group II introns. The sequence is that of Maturase K from Piper cenocladum (Ant piper).